A 246-amino-acid polypeptide reads, in one-letter code: Pyridoxine 5'-phosphate synthase (246 aa).

A 3-amino-2-oxopropyl phosphate-binding site is contributed by asparagine 12. 1-deoxy-D-xylulose 5-phosphate is bound at residue 14–15 (DH). Arginine 23 is a 3-amino-2-oxopropyl phosphate binding site. Catalysis depends on histidine 48, which acts as the Proton acceptor. 2 residues coordinate 1-deoxy-D-xylulose 5-phosphate: arginine 50 and histidine 55. Catalysis depends on glutamate 75, which acts as the Proton acceptor. Threonine 105 contributes to the 1-deoxy-D-xylulose 5-phosphate binding site. Histidine 196 (proton donor) is an active-site residue. 3-amino-2-oxopropyl phosphate contacts are provided by residues glycine 197 and 218–219 (GH).

It belongs to the PNP synthase family. In terms of assembly, homooctamer; tetramer of dimers.

It localises to the cytoplasm. The enzyme catalyses 3-amino-2-oxopropyl phosphate + 1-deoxy-D-xylulose 5-phosphate = pyridoxine 5'-phosphate + phosphate + 2 H2O + H(+). It functions in the pathway cofactor biosynthesis; pyridoxine 5'-phosphate biosynthesis; pyridoxine 5'-phosphate from D-erythrose 4-phosphate: step 5/5. Its function is as follows. Catalyzes the complicated ring closure reaction between the two acyclic compounds 1-deoxy-D-xylulose-5-phosphate (DXP) and 3-amino-2-oxopropyl phosphate (1-amino-acetone-3-phosphate or AAP) to form pyridoxine 5'-phosphate (PNP) and inorganic phosphate. This is Pyridoxine 5'-phosphate synthase from Pseudomonas putida (strain ATCC 47054 / DSM 6125 / CFBP 8728 / NCIMB 11950 / KT2440).